We begin with the raw amino-acid sequence, 326 residues long: Pyruvate dehydrogenase E1 component subunit alpha (326 aa).

Heterodimer of an alpha and a beta chain. Requires thiamine diphosphate as cofactor.

The catalysed reaction is N(6)-[(R)-lipoyl]-L-lysyl-[protein] + pyruvate + H(+) = N(6)-[(R)-S(8)-acetyldihydrolipoyl]-L-lysyl-[protein] + CO2. In terms of biological role, the pyruvate dehydrogenase complex catalyzes the overall conversion of pyruvate to acetyl-CoA and CO(2). It contains multiple copies of three enzymatic components: pyruvate dehydrogenase (E1), dihydrolipoamide acetyltransferase (E2) and lipoamide dehydrogenase (E3). This Rickettsia felis (strain ATCC VR-1525 / URRWXCal2) (Rickettsia azadi) protein is Pyruvate dehydrogenase E1 component subunit alpha (pdhA).